Consider the following 142-residue polypeptide: Large ribosomal subunit protein uL11 (142 aa).

Belongs to the universal ribosomal protein uL11 family. Part of the ribosomal stalk of the 50S ribosomal subunit. Interacts with L10 and the large rRNA to form the base of the stalk. L10 forms an elongated spine to which L12 dimers bind in a sequential fashion forming a multimeric L10(L12)X complex. Post-translationally, one or more lysine residues are methylated.

Its function is as follows. Forms part of the ribosomal stalk which helps the ribosome interact with GTP-bound translation factors. The chain is Large ribosomal subunit protein uL11 from Maricaulis maris (strain MCS10) (Caulobacter maris).